Consider the following 254-residue polypeptide: Bax inhibitor 1 homolog (254 aa).

The Cytoplasmic portion of the chain corresponds to 1-43 (MASTSNRNFFSSNMTQIPMDEKIRIALQFNNLSQSTKQTLTKV). The helical transmembrane segment at 44-64 (YCALAIGILTATVGVLFSMFI) threads the bilayer. At 65–66 (YR) the chain is on the lumenal side. The helical transmembrane segment at 67-87 (PGFLMTLLLVIGSAILFATTP) threads the bilayer. The Cytoplasmic segment spans residues 88-98 (RTQDYKTQVKR). Residues 99-119 (FTLFNLVTFVTGMSSSGLIEL) traverse the membrane as a helical segment. Residues 120–126 (YMDINSS) lie on the Lumenal side of the membrane. A helical membrane pass occupies residues 127–147 (IVLNAFMATCGIFISFTLFSL). Residues 148-152 (LTNKR) are Cytoplasmic-facing. A helical membrane pass occupies residues 153–173 (LYIFIGSSLASLSIGIFVLAL). Over 174–187 (TRLFGGYSEPLDQL) the chain is Lumenal. Residues 188–208 (FILAILASSVLFIIFDTQIMV) form a helical membrane-spanning segment. Residues 209–217 (HRIENLGEK) lie on the Cytoplasmic side of the membrane. Positions 218–238 (DVLFHAFILFYDFVDLFRVIL) form an intramembrane region, helical. The Cytoplasmic portion of the chain corresponds to 239–254 (KILAKKENKNNNKSRR).

It belongs to the BI1 family.

The protein localises to the endoplasmic reticulum membrane. This chain is Bax inhibitor 1 homolog, found in Dictyostelium discoideum (Social amoeba).